The chain runs to 229 residues: Large ribosomal subunit protein uL1 (229 aa).

This sequence belongs to the universal ribosomal protein uL1 family. Part of the 50S ribosomal subunit.

Binds directly to 23S rRNA. The L1 stalk is quite mobile in the ribosome, and is involved in E site tRNA release. Functionally, protein L1 is also a translational repressor protein, it controls the translation of the L11 operon by binding to its mRNA. The protein is Large ribosomal subunit protein uL1 of Streptococcus pneumoniae (strain ATCC 700669 / Spain 23F-1).